A 339-amino-acid polypeptide reads, in one-letter code: Holliday junction branch migration complex subunit RuvB (339 aa).

Residues 1-181 (MEERLVSGYE…FGMVHRLEFY (181 aa)) form a large ATPase domain (RuvB-L) region. Residues Leu-20, Arg-21, Gly-62, Lys-65, Thr-66, Thr-67, 128-130 (EDF), Arg-171, Tyr-181, and Arg-218 each bind ATP. Thr-66 provides a ligand contact to Mg(2+). The small ATPAse domain (RuvB-S) stretch occupies residues 182 to 252 (SVEELMLIIN…NAKAALDLLE (71 aa)). The head domain (RuvB-H) stretch occupies residues 255 to 339 (ELGLDPTDRL…NKNAGELSLW (85 aa)). DNA contacts are provided by Arg-310 and Arg-315.

The protein belongs to the RuvB family. Homohexamer. Forms an RuvA(8)-RuvB(12)-Holliday junction (HJ) complex. HJ DNA is sandwiched between 2 RuvA tetramers; dsDNA enters through RuvA and exits via RuvB. An RuvB hexamer assembles on each DNA strand where it exits the tetramer. Each RuvB hexamer is contacted by two RuvA subunits (via domain III) on 2 adjacent RuvB subunits; this complex drives branch migration. In the full resolvosome a probable DNA-RuvA(4)-RuvB(12)-RuvC(2) complex forms which resolves the HJ.

The protein localises to the cytoplasm. The catalysed reaction is ATP + H2O = ADP + phosphate + H(+). Its function is as follows. The RuvA-RuvB-RuvC complex processes Holliday junction (HJ) DNA during genetic recombination and DNA repair, while the RuvA-RuvB complex plays an important role in the rescue of blocked DNA replication forks via replication fork reversal (RFR). RuvA specifically binds to HJ cruciform DNA, conferring on it an open structure. The RuvB hexamer acts as an ATP-dependent pump, pulling dsDNA into and through the RuvAB complex. RuvB forms 2 homohexamers on either side of HJ DNA bound by 1 or 2 RuvA tetramers; 4 subunits per hexamer contact DNA at a time. Coordinated motions by a converter formed by DNA-disengaged RuvB subunits stimulates ATP hydrolysis and nucleotide exchange. Immobilization of the converter enables RuvB to convert the ATP-contained energy into a lever motion, pulling 2 nucleotides of DNA out of the RuvA tetramer per ATP hydrolyzed, thus driving DNA branch migration. The RuvB motors rotate together with the DNA substrate, which together with the progressing nucleotide cycle form the mechanistic basis for DNA recombination by continuous HJ branch migration. Branch migration allows RuvC to scan DNA until it finds its consensus sequence, where it cleaves and resolves cruciform DNA. The sequence is that of Holliday junction branch migration complex subunit RuvB from Carboxydothermus hydrogenoformans (strain ATCC BAA-161 / DSM 6008 / Z-2901).